The following is a 152-amino-acid chain: Xanthine-guanine phosphoribosyltransferase (152 aa).

5-phospho-alpha-D-ribose 1-diphosphate-binding positions include 37–38, Arg69, and 88–96; these read RG and DDLVDTGGT. Position 69 (Arg69) interacts with GMP. A Mg(2+)-binding site is contributed by Asp89. Asp92 and Ile135 together coordinate guanine. 2 residues coordinate xanthine: Asp92 and Ile135. GMP-binding positions include 92-96 and 134-135; these read DTGGT and WI.

Belongs to the purine/pyrimidine phosphoribosyltransferase family. XGPT subfamily. Homotetramer. It depends on Mg(2+) as a cofactor.

It is found in the cell inner membrane. It carries out the reaction GMP + diphosphate = guanine + 5-phospho-alpha-D-ribose 1-diphosphate. It catalyses the reaction XMP + diphosphate = xanthine + 5-phospho-alpha-D-ribose 1-diphosphate. The enzyme catalyses IMP + diphosphate = hypoxanthine + 5-phospho-alpha-D-ribose 1-diphosphate. It participates in purine metabolism; GMP biosynthesis via salvage pathway; GMP from guanine: step 1/1. Its pathway is purine metabolism; XMP biosynthesis via salvage pathway; XMP from xanthine: step 1/1. In terms of biological role, purine salvage pathway enzyme that catalyzes the transfer of the ribosyl-5-phosphate group from 5-phospho-alpha-D-ribose 1-diphosphate (PRPP) to the N9 position of the 6-oxopurines guanine and xanthine to form the corresponding ribonucleotides GMP (guanosine 5'-monophosphate) and XMP (xanthosine 5'-monophosphate), with the release of PPi. To a lesser extent, also acts on hypoxanthine. The protein is Xanthine-guanine phosphoribosyltransferase of Shigella boydii serotype 18 (strain CDC 3083-94 / BS512).